The primary structure comprises 232 residues: ATP phosphoribosyltransferase (232 aa).

Belongs to the ATP phosphoribosyltransferase family. Short subfamily. Heteromultimer composed of HisG and HisZ subunits.

It is found in the cytoplasm. It catalyses the reaction 1-(5-phospho-beta-D-ribosyl)-ATP + diphosphate = 5-phospho-alpha-D-ribose 1-diphosphate + ATP. Its pathway is amino-acid biosynthesis; L-histidine biosynthesis; L-histidine from 5-phospho-alpha-D-ribose 1-diphosphate: step 1/9. Its function is as follows. Catalyzes the condensation of ATP and 5-phosphoribose 1-diphosphate to form N'-(5'-phosphoribosyl)-ATP (PR-ATP). Has a crucial role in the pathway because the rate of histidine biosynthesis seems to be controlled primarily by regulation of HisG enzymatic activity. The chain is ATP phosphoribosyltransferase (hisG) from Mesorhizobium japonicum (strain LMG 29417 / CECT 9101 / MAFF 303099) (Mesorhizobium loti (strain MAFF 303099)).